Reading from the N-terminus, the 243-residue chain is Venom nerve growth factor 2 (243 aa).

The signal sequence occupies residues 1-18 (MSMLCYTLIIAFLIGIWA). The propeptide occupies 19–125 (APKSEDNVPL…TLNRNIRAKR (107 aa)). Residues 47–66 (GLKTSRNTDQRHPAPKKAED) are compositionally biased toward basic and acidic residues. Residues 47–67 (GLKTSRNTDQRHPAPKKAEDQ) are disordered. Disulfide bonds link C139/C204 and C192/C234. N148 is a glycosylation site (N-linked (GlcNAc...) asparagine).

It belongs to the NGF-beta family. As to quaternary structure, homodimer; non-covalently linked. In terms of tissue distribution, expressed by the venom gland.

Its subcellular location is the secreted. Its function is as follows. Nerve growth factor is important for the development and maintenance of the sympathetic and sensory nervous systems. It stimulates division and differentiation of sympathetic and embryonic sensory neurons as well as basal forebrain cholinergic neurons in the brain. Its relevance in the snake venom is not clear. However, it has been shown to inhibit metalloproteinase-dependent proteolysis of platelet glycoprotein Ib alpha, suggesting a metalloproteinase inhibition to prevent metalloprotease autodigestion and/or protection against prey proteases. Binds a lipid between the two protein chains in the homodimer. The lipid-bound form promotes histamine relase from mouse mast cells, contrary to the lipid-free form. This is Venom nerve growth factor 2 from Pseudonaja textilis (Eastern brown snake).